Here is an 891-residue protein sequence, read N- to C-terminus: Aconitate hydratase A (891 aa).

[4Fe-4S] cluster-binding residues include Cys-435, Cys-501, and Cys-504.

It belongs to the aconitase/IPM isomerase family. As to quaternary structure, monomer. It depends on [4Fe-4S] cluster as a cofactor.

It carries out the reaction citrate = D-threo-isocitrate. The protein operates within carbohydrate metabolism; tricarboxylic acid cycle; isocitrate from oxaloacetate: step 2/2. Catalyzes the reversible isomerization of citrate to isocitrate via cis-aconitate. The apo form of AcnA functions as a RNA-binding regulatory protein which plays a role as a maintenance or survival enzyme during nutritional or oxidative stress. During oxidative stress inactive AcnA apo-enzyme without iron sulfur clusters binds the acnA mRNA 3' UTRs (untranslated regions), stabilizes acnA mRNA and increases AcnA synthesis, thus mediating a post-transcriptional positive autoregulatory switch. AcnA also enhances the stability of the sodA transcript. This chain is Aconitate hydratase A, found in Escherichia coli (strain K12).